The primary structure comprises 45 residues: uncharacterized protein (45 aa).

The disordered stretch occupies residues 18–45 (RRGRIGVQPSPERRSEVVGPFPLARSLS).

This is an uncharacterized protein from Homo sapiens (Human).